The sequence spans 227 residues: ATP-dependent dethiobiotin synthetase BioD (227 aa).

N13 to V18 contributes to the ATP binding site. Residue T17 participates in Mg(2+) binding. K38 is a catalytic residue. ATP is bound by residues D55 and E116–G119. Mg(2+) is bound by residues D55 and E116.

Belongs to the dethiobiotin synthetase family. Homodimer. It depends on Mg(2+) as a cofactor.

It is found in the cytoplasm. It carries out the reaction (7R,8S)-7,8-diammoniononanoate + CO2 + ATP = (4R,5S)-dethiobiotin + ADP + phosphate + 3 H(+). It participates in cofactor biosynthesis; biotin biosynthesis; biotin from 7,8-diaminononanoate: step 1/2. Its function is as follows. Catalyzes a mechanistically unusual reaction, the ATP-dependent insertion of CO2 between the N7 and N8 nitrogen atoms of 7,8-diaminopelargonic acid (DAPA, also called 7,8-diammoniononanoate) to form a ureido ring. This Buchnera aphidicola subsp. Baizongia pistaciae (strain Bp) protein is ATP-dependent dethiobiotin synthetase BioD.